Reading from the N-terminus, the 373-residue chain is 3-dehydroquinate synthase (373 aa).

Residues 67–72 (EGEETK), 101–105 (GVILD), 125–126 (TT), Lys-138, and Lys-147 contribute to the NAD(+) site. Residues Glu-180, His-240, and His-256 each contribute to the Zn(2+) site.

This sequence belongs to the sugar phosphate cyclases superfamily. Dehydroquinate synthase family. The cofactor is NAD(+). Requires Co(2+) as cofactor. Zn(2+) serves as cofactor.

It localises to the cytoplasm. The catalysed reaction is 7-phospho-2-dehydro-3-deoxy-D-arabino-heptonate = 3-dehydroquinate + phosphate. Its pathway is metabolic intermediate biosynthesis; chorismate biosynthesis; chorismate from D-erythrose 4-phosphate and phosphoenolpyruvate: step 2/7. In terms of biological role, catalyzes the conversion of 3-deoxy-D-arabino-heptulosonate 7-phosphate (DAHP) to dehydroquinate (DHQ). The polypeptide is 3-dehydroquinate synthase (Chlamydia trachomatis serovar L2 (strain ATCC VR-902B / DSM 19102 / 434/Bu)).